Consider the following 39-residue polypeptide: Photosystem II reaction center protein J (39 aa).

The chain crosses the membrane as a helical span at residues 7–27 (IPLWLIGTIVGILVIGLIGIY).

Belongs to the PsbJ family. PSII is composed of 1 copy each of membrane proteins PsbA, PsbB, PsbC, PsbD, PsbE, PsbF, PsbH, PsbI, PsbJ, PsbK, PsbL, PsbM, PsbT, PsbX, PsbY, PsbZ, Psb30/Ycf12, at least 3 peripheral proteins of the oxygen-evolving complex and a large number of cofactors. It forms dimeric complexes.

The protein resides in the plastid. It localises to the chloroplast thylakoid membrane. Functionally, one of the components of the core complex of photosystem II (PSII). PSII is a light-driven water:plastoquinone oxidoreductase that uses light energy to abstract electrons from H(2)O, generating O(2) and a proton gradient subsequently used for ATP formation. It consists of a core antenna complex that captures photons, and an electron transfer chain that converts photonic excitation into a charge separation. The polypeptide is Photosystem II reaction center protein J (Welwitschia mirabilis (Tree tumbo)).